A 952-amino-acid chain; its full sequence is Leucine--tRNA ligase (952 aa).

The short motif at 66-77 is the 'HIGH' region element; sequence PYPSGAGLHVGH. The 'KMSKS' region signature appears at 722 to 726; it reads KMGKS. Residue Lys-725 coordinates ATP.

The protein belongs to the class-I aminoacyl-tRNA synthetase family.

Its subcellular location is the cytoplasm. It carries out the reaction tRNA(Leu) + L-leucine + ATP = L-leucyl-tRNA(Leu) + AMP + diphosphate. The polypeptide is Leucine--tRNA ligase (Corynebacterium glutamicum (strain R)).